The sequence spans 103 residues: Large ribosomal subunit protein bL21 (103 aa).

Residues 83–92 (YRRKKGHRQP) are compositionally biased toward basic residues. Positions 83-103 (YRRKKGHRQPFSRVTVEKIEA) are disordered.

Belongs to the bacterial ribosomal protein bL21 family. Part of the 50S ribosomal subunit. Contacts protein L20.

In terms of biological role, this protein binds to 23S rRNA in the presence of protein L20. The chain is Large ribosomal subunit protein bL21 from Pelotomaculum thermopropionicum (strain DSM 13744 / JCM 10971 / SI).